Consider the following 126-residue polypeptide: Aspartate 1-decarboxylase (126 aa).

Catalysis depends on S25, which acts as the Schiff-base intermediate with substrate; via pyruvic acid. The residue at position 25 (S25) is a Pyruvic acid (Ser). Residue T57 coordinates substrate. Y58 acts as the Proton donor in catalysis. 73 to 75 (GAA) is a substrate binding site.

It belongs to the PanD family. Heterooctamer of four alpha and four beta subunits. Pyruvate serves as cofactor. In terms of processing, is synthesized initially as an inactive proenzyme, which is activated by self-cleavage at a specific serine bond to produce a beta-subunit with a hydroxyl group at its C-terminus and an alpha-subunit with a pyruvoyl group at its N-terminus.

It localises to the cytoplasm. It catalyses the reaction L-aspartate + H(+) = beta-alanine + CO2. It functions in the pathway cofactor biosynthesis; (R)-pantothenate biosynthesis; beta-alanine from L-aspartate: step 1/1. Its function is as follows. Catalyzes the pyruvoyl-dependent decarboxylation of aspartate to produce beta-alanine. This chain is Aspartate 1-decarboxylase, found in Salmonella arizonae (strain ATCC BAA-731 / CDC346-86 / RSK2980).